We begin with the raw amino-acid sequence, 739 residues long: Vascular cell adhesion protein 1 (739 aa).

Residues 1–24 (MPGKMVVILGASNILWIMFAASQA) form the signal peptide. 7 consecutive Ig-like C2-type domains span residues 25–105 (FKIE…RKLE), 109–212 (QVEI…TVRQ), 223–309 (PKNT…LIVQ), 312–399 (PFTV…IQVE), 408–506 (EIEM…QTLY), 511–595 (PRDT…VELI), and 600–684 (PKDI…LTLD). Topologically, residues 25–698 (FKIETTPESR…ENNKDYFSPE (674 aa)) are extracellular. 5 disulfide bridges follow: Cys47–Cys95, Cys52–Cys99, Cys137–Cys195, Cys246–Cys291, and Cys335–Cys383. N-linked (GlcNAc...) asparagine glycans are attached at residues Asn273, Asn365, Asn417, Asn463, Asn531, and Asn561. Cys534 and Cys579 are oxidised to a cystine. Residues 699-720 (LLVLYFASSLIIPAIGMIIYFA) traverse the membrane as a helical segment. Over 721–739 (RKANMKGSYSLVEAQKSKV) the chain is Cytoplasmic.

In terms of processing, cleaved by the metalloproteinase ADAM17 to generate the soluble form. Post-translationally, sialoglycoprotein. Ubiquitinated by TRIM65 via 'Lys-48'-linked ubiquitination; leading to proteasomal degradation. Expressed on inflamed vascular endothelium, as well as on macrophage-like and dendritic cell types in both normal and inflamed tissue.

Its subcellular location is the cell membrane. It localises to the secreted. Functionally, cell adhesion glycoprotein predominantly expressed on the surface of endothelial cells that plays an important role in immune surveillance and inflammation. Acts as a major regulator of leukocyte adhesion to the endothelium through interaction with different types of integrins. During inflammatory responses, binds ligands on the surface of activated endothelial cells to initiate the activation of calcium channels and the plasma membrane-associated small GTPase RAC1 leading to leukocyte transendothelial migration. Also serves as a quality-control checkpoint for entry into bone marrow by providing a 'don't-eat-me' stamping in the context of major histocompatibility complex (MHC) class-I presentation. In Homo sapiens (Human), this protein is Vascular cell adhesion protein 1 (VCAM1).